Here is a 422-residue protein sequence, read N- to C-terminus: UDP-N-acetylglucosamine 1-carboxyvinyltransferase (422 aa).

A phosphoenolpyruvate-binding site is contributed by 22–23; that stretch reads KN. Residue R95 participates in UDP-N-acetyl-alpha-D-glucosamine binding. Catalysis depends on C119, which acts as the Proton donor. C119 is modified (2-(S-cysteinyl)pyruvic acid O-phosphothioketal). Residues 124–128, D309, and V331 each bind UDP-N-acetyl-alpha-D-glucosamine; that span reads RPIDQ.

It belongs to the EPSP synthase family. MurA subfamily.

It is found in the cytoplasm. The enzyme catalyses phosphoenolpyruvate + UDP-N-acetyl-alpha-D-glucosamine = UDP-N-acetyl-3-O-(1-carboxyvinyl)-alpha-D-glucosamine + phosphate. It participates in cell wall biogenesis; peptidoglycan biosynthesis. Functionally, cell wall formation. Adds enolpyruvyl to UDP-N-acetylglucosamine. The chain is UDP-N-acetylglucosamine 1-carboxyvinyltransferase from Anaeromyxobacter dehalogenans (strain 2CP-C).